We begin with the raw amino-acid sequence, 252 residues long: Imidazole glycerol phosphate synthase subunit HisF (252 aa).

Residues Asp11 and Asp130 contribute to the active site.

This sequence belongs to the HisA/HisF family. As to quaternary structure, heterodimer of HisH and HisF.

The protein localises to the cytoplasm. The catalysed reaction is 5-[(5-phospho-1-deoxy-D-ribulos-1-ylimino)methylamino]-1-(5-phospho-beta-D-ribosyl)imidazole-4-carboxamide + L-glutamine = D-erythro-1-(imidazol-4-yl)glycerol 3-phosphate + 5-amino-1-(5-phospho-beta-D-ribosyl)imidazole-4-carboxamide + L-glutamate + H(+). It functions in the pathway amino-acid biosynthesis; L-histidine biosynthesis; L-histidine from 5-phospho-alpha-D-ribose 1-diphosphate: step 5/9. IGPS catalyzes the conversion of PRFAR and glutamine to IGP, AICAR and glutamate. The HisF subunit catalyzes the cyclization activity that produces IGP and AICAR from PRFAR using the ammonia provided by the HisH subunit. This is Imidazole glycerol phosphate synthase subunit HisF from Acinetobacter baylyi (strain ATCC 33305 / BD413 / ADP1).